A 251-amino-acid chain; its full sequence is Retinoic acid early-inducible protein 1-epsilon (251 aa).

A signal peptide spans 1–28; that stretch reads MAKAAVTKRHHFMIQKLLILLSYGYTNG. Cys-37 and Cys-56 are disulfide-bonded. 5 N-linked (GlcNAc...) asparagine glycosylation sites follow: Asn-38, Asn-70, Asn-83, Asn-141, and Asn-154. An intrachain disulfide couples Cys-88 to Cys-188. The tract at residues 196-228 is disordered; that stretch reads LKQSKEKPRSTSRSPSITQLTSTSPLPPPSHST. A compositionally biased stretch (low complexity) spans 209 to 219; the sequence is SPSITQLTSTS. The GPI-anchor amidated serine moiety is linked to residue Ser-225. Positions 226–251 are cleaved as a propeptide — removed in mature form; the sequence is HSTSKKGFISVGLIFISLLFAFAFAM.

The protein belongs to the NKG2D ligand family. In terms of processing, glycosylated.

Its subcellular location is the cell membrane. Acts as a ligand for KLRK1. The sequence is that of Retinoic acid early-inducible protein 1-epsilon (Raet1e) from Mus musculus (Mouse).